The chain runs to 1032 residues: Integrin alpha-4 (1032 aa).

Residues 1-34 (MIRDLGKVGKVSLLLDHIWTGILLYTVILTPADC) form the signal peptide. The Extracellular portion of the chain corresponds to 35–974 (YNIDESSPML…LHNLKPKKHV (940 aa)). FG-GAP repeat units follow at residues 36-100 (NIDE…PNRT), 113-177 (KCGK…TELS), 186-237 (DHVR…TIKS), 238-291 (YVDL…EKQL), 292-351 (TILF…GAME), 353-411 (LKFE…GITP), and 415-477 (QRLQ…LPST). Asparagine 81 and asparagine 98 each carry an N-linked (GlcNAc...) asparagine glycan. Intrachain disulfides connect cysteine 91–cysteine 101, cysteine 144–cysteine 165, and cysteine 183–cysteine 198. Asparagine 229 carries N-linked (GlcNAc...) asparagine glycosylation. Ca(2+) contacts are provided by aspartate 314, asparagine 316, aspartate 318, leucine 320, aspartate 322, aspartate 376, aspartate 378, aspartate 380, aspartate 384, aspartate 438, aspartate 440, asparagine 442, tyrosine 444, and aspartate 446. An N-linked (GlcNAc...) asparagine glycan is attached at asparagine 479. A disulfide bridge connects residues cysteine 485 and cysteine 494. 5 N-linked (GlcNAc...) asparagine glycosylation sites follow: asparagine 496, asparagine 517, asparagine 537, asparagine 626, and asparagine 660. Disulfide bonds link cysteine 500–cysteine 556 and cysteine 622–cysteine 627. Cysteine 698 and cysteine 712 are oxidised to a cystine. 2 N-linked (GlcNAc...) asparagine glycosylation sites follow: asparagine 746 and asparagine 857. Disulfide bonds link cysteine 853-cysteine 889 and cysteine 896-cysteine 901. Residues 975-998 (IYMIIGISLLLGILLFSLLTYILW) form a helical membrane-spanning segment. At 999 to 1032 (KVGFFRRKYQPIGTEETSRRESWNYLNKDEKEVK) the chain is on the cytoplasmic side. Residues 1001 to 1005 (GFFRR) carry the GFFKR motif motif.

This sequence belongs to the integrin alpha chain family. Heterodimer of an alpha and a beta subunit.

The protein localises to the membrane. Fibronectin and V-CAM adhesion receptor. The sequence is that of Integrin alpha-4 (itga4) from Xenopus laevis (African clawed frog).